A 396-amino-acid polypeptide reads, in one-letter code: Acetate kinase (396 aa).

Residue Asn-6 coordinates Mg(2+). Lys-13 lines the ATP pocket. Residue Arg-89 participates in substrate binding. Asp-145 (proton donor/acceptor) is an active-site residue. ATP contacts are provided by residues 205–209 (HLGNG), 280–282 (DMR), and 329–333 (GVGEN). Residue Glu-383 participates in Mg(2+) binding.

It belongs to the acetokinase family. In terms of assembly, homodimer. Mg(2+) is required as a cofactor. The cofactor is Mn(2+).

The protein resides in the cytoplasm. The catalysed reaction is acetate + ATP = acetyl phosphate + ADP. It participates in metabolic intermediate biosynthesis; acetyl-CoA biosynthesis; acetyl-CoA from acetate: step 1/2. Its function is as follows. Catalyzes the formation of acetyl phosphate from acetate and ATP. Can also catalyze the reverse reaction. The polypeptide is Acetate kinase (Mesoplasma florum (strain ATCC 33453 / NBRC 100688 / NCTC 11704 / L1) (Acholeplasma florum)).